We begin with the raw amino-acid sequence, 444 residues long: UPF0053 protein YhdP (444 aa).

The CNNM transmembrane domain maps to 1-201; that stretch reads MDIVNLILVA…YKSGEINQSE (201 aa). 3 consecutive transmembrane segments (helical) span residues 7–27, 61–81, and 101–121; these read ILVAVLIALTAFFVASEFAII, ACQLGITLTSIGLGVLGESTI, and VISFIFAYAIITFLHVVVGEL. CBS domains follow at residues 220-282 and 284-344; these read MIPR…SVDS and ISQF…IRDE.

This sequence belongs to the UPF0053 family.

It is found in the cell membrane. This chain is UPF0053 protein YhdP (yhdP), found in Bacillus subtilis (strain 168).